The sequence spans 397 residues: Chorismate synthase (397 aa).

NADP(+)-binding residues include Arg-40 and Arg-46. FMN contacts are provided by residues 129-131 (RSS), 257-258 (QA), Gly-302, 317-321 (KPISS), and Arg-343.

The protein belongs to the chorismate synthase family. In terms of assembly, homotetramer. It depends on FMNH2 as a cofactor.

It catalyses the reaction 5-O-(1-carboxyvinyl)-3-phosphoshikimate = chorismate + phosphate. The protein operates within metabolic intermediate biosynthesis; chorismate biosynthesis; chorismate from D-erythrose 4-phosphate and phosphoenolpyruvate: step 7/7. Functionally, catalyzes the anti-1,4-elimination of the C-3 phosphate and the C-6 proR hydrogen from 5-enolpyruvylshikimate-3-phosphate (EPSP) to yield chorismate, which is the branch point compound that serves as the starting substrate for the three terminal pathways of aromatic amino acid biosynthesis. This reaction introduces a second double bond into the aromatic ring system. This is Chorismate synthase from Chlorobaculum tepidum (strain ATCC 49652 / DSM 12025 / NBRC 103806 / TLS) (Chlorobium tepidum).